A 385-amino-acid chain; its full sequence is tRNA-specific 2-thiouridylase MnmA (385 aa).

ATP is bound by residues 29 to 36 (GLSGGVDS) and leucine 55. Cysteine 116 serves as the catalytic Nucleophile. The cysteines at positions 116 and 225 are disulfide-linked. Glycine 141 serves as a coordination point for ATP. The interval 175-177 (KDQ) is interaction with tRNA. The active-site Cysteine persulfide intermediate is cysteine 225. The interaction with tRNA stretch occupies residues 330–331 (RY).

It belongs to the MnmA/TRMU family.

The protein resides in the cytoplasm. It catalyses the reaction S-sulfanyl-L-cysteinyl-[protein] + uridine(34) in tRNA + AH2 + ATP = 2-thiouridine(34) in tRNA + L-cysteinyl-[protein] + A + AMP + diphosphate + H(+). In terms of biological role, catalyzes the 2-thiolation of uridine at the wobble position (U34) of tRNA, leading to the formation of s(2)U34. This is tRNA-specific 2-thiouridylase MnmA from Prochlorococcus marinus (strain MIT 9301).